A 123-amino-acid chain; its full sequence is Large ribosomal subunit protein bL12 (123 aa).

This sequence belongs to the bacterial ribosomal protein bL12 family. As to quaternary structure, homodimer. Part of the ribosomal stalk of the 50S ribosomal subunit. Forms a multimeric L10(L12)X complex, where L10 forms an elongated spine to which 2 to 4 L12 dimers bind in a sequential fashion. Binds GTP-bound translation factors.

Functionally, forms part of the ribosomal stalk which helps the ribosome interact with GTP-bound translation factors. Is thus essential for accurate translation. This is Large ribosomal subunit protein bL12 from Roseobacter denitrificans (strain ATCC 33942 / OCh 114) (Erythrobacter sp. (strain OCh 114)).